Consider the following 321-residue polypeptide: MQGGREVGRESVSDLAEELGEGSLHPTAGGQSGDSLERRRIGYDGPVILPDANANSSRLDEGLSSSRPHPGELGGGWGEFEGFQESSAKSEEFSQSFELLGRAAECQPLRTPSTPKEGGSCQVQQGGPWVTGTAAGPSSESILSYEKVFRLAFQEVPVEQATEDVCSLDRFLETGSEETAPVPRLCSESRKLWRALQNTDTVSASRCLWSESHCRENLFPVLGIDAAQKSLSGDQGHDLEGSDCRKPEDLLGVSGFHLHHCKALIQTKLSGTSGSRQGSLITYSLFLKTPLQGNGRYITIPQKKIFTPRNLKMAFFNNNVC.

The span at 1–12 (MQGGREVGRESV) shows a compositional bias: basic and acidic residues. A disordered region spans residues 1–85 (MQGGREVGRE…GWGEFEGFQE (85 aa)). Over residues 53–67 (NANSSRLDEGLSSSR) the composition is skewed to polar residues.

This is an uncharacterized protein from Rattus norvegicus (Rat).